We begin with the raw amino-acid sequence, 124 residues long: Large ribosomal subunit protein bL12 (124 aa).

The protein belongs to the bacterial ribosomal protein bL12 family. In terms of assembly, homodimer. Part of the ribosomal stalk of the 50S ribosomal subunit. Forms a multimeric L10(L12)X complex, where L10 forms an elongated spine to which 2 to 4 L12 dimers bind in a sequential fashion. Binds GTP-bound translation factors.

In terms of biological role, forms part of the ribosomal stalk which helps the ribosome interact with GTP-bound translation factors. Is thus essential for accurate translation. This chain is Large ribosomal subunit protein bL12, found in Herminiimonas arsenicoxydans.